The sequence spans 314 residues: DNA-directed RNA polymerase subunit alpha (314 aa).

The segment at 1–228 (MIEFEKPKIH…EHLAIFVNLN (228 aa)) is alpha N-terminal domain (alpha-NTD). The interval 245–314 (KEKMLEMTIE…LLGLGFRSED (70 aa)) is alpha C-terminal domain (alpha-CTD).

The protein belongs to the RNA polymerase alpha chain family. In terms of assembly, homodimer. The RNAP catalytic core consists of 2 alpha, 1 beta, 1 beta' and 1 omega subunit. When a sigma factor is associated with the core the holoenzyme is formed, which can initiate transcription.

It catalyses the reaction RNA(n) + a ribonucleoside 5'-triphosphate = RNA(n+1) + diphosphate. In terms of biological role, DNA-dependent RNA polymerase catalyzes the transcription of DNA into RNA using the four ribonucleoside triphosphates as substrates. This Pediococcus pentosaceus (strain ATCC 25745 / CCUG 21536 / LMG 10740 / 183-1w) protein is DNA-directed RNA polymerase subunit alpha.